The sequence spans 803 residues: Zinc finger protein 226 (803 aa).

The 71-residue stretch at 8–78 (VTFKDVAVAF…TTATRRQGNL (71 aa)) folds into the KRAB domain. A C2H2-type 1; degenerate zinc finger spans residues 252-274 (YQCNECKKPFSDLSSFDLHQQLQ). The segment at 280–302 (LTCVERGKGFCYSPVLPVHQKVH) adopts a C2H2-type 2; degenerate zinc-finger fold. C2H2-type zinc fingers lie at residues 307 to 329 (LKCD…QKVH), 335 to 357 (YKCK…CKVH), 363 to 385 (YNCE…QRLH), 391 to 413 (FKCD…QRVH), 419 to 441 (YKCE…QRVH), 447 to 469 (YKCE…QGVH), 475 to 497 (YICT…QRVH), 503 to 525 (YKCN…LVVH), 531 to 553 (YKCE…QKAH), 559 to 581 (FKCE…QLIH), 587 to 609 (YKCE…CRIH), 615 to 637 (YNCE…QRVH), 643 to 665 (FKCE…QKVH), 671 to 693 (YKCD…QRVH), 699 to 721 (YKCG…QSVH), 727 to 749 (YKCD…QRVH), and 755 to 777 (YKCE…HRIH). Residues 781–803 (KSYKSNRGGKNIRESTQEKKSIK) are disordered. Positions 791–803 (NIRESTQEKKSIK) are enriched in basic and acidic residues.

This sequence belongs to the krueppel C2H2-type zinc-finger protein family.

It localises to the nucleus. May be involved in transcriptional regulation. This chain is Zinc finger protein 226 (ZNF226), found in Homo sapiens (Human).